A 351-amino-acid polypeptide reads, in one-letter code: Phosphate acetyltransferase (351 aa).

The protein belongs to the phosphate acetyltransferase and butyryltransferase family.

Its subcellular location is the cytoplasm. It carries out the reaction acetyl-CoA + phosphate = acetyl phosphate + CoA. It participates in metabolic intermediate biosynthesis; acetyl-CoA biosynthesis; acetyl-CoA from acetate: step 2/2. This is Phosphate acetyltransferase (pta) from Rickettsia prowazekii (strain Madrid E).